A 272-amino-acid chain; its full sequence is Pantothenate synthetase (272 aa).

An ATP-binding site is contributed by 27 to 34 (MGALHNGH). His-34 acts as the Proton donor in catalysis. Gln-58 provides a ligand contact to (R)-pantoate. Gln-58 is a beta-alanine binding site. 143-146 (GKKD) provides a ligand contact to ATP. (R)-pantoate is bound at residue Gln-149. ATP-binding positions include Val-172 and 180–183 (LSSR).

This sequence belongs to the pantothenate synthetase family. As to quaternary structure, homodimer.

Its subcellular location is the cytoplasm. The enzyme catalyses (R)-pantoate + beta-alanine + ATP = (R)-pantothenate + AMP + diphosphate + H(+). It functions in the pathway cofactor biosynthesis; (R)-pantothenate biosynthesis; (R)-pantothenate from (R)-pantoate and beta-alanine: step 1/1. In terms of biological role, catalyzes the condensation of pantoate with beta-alanine in an ATP-dependent reaction via a pantoyl-adenylate intermediate. This chain is Pantothenate synthetase, found in Aliarcobacter butzleri (strain RM4018) (Arcobacter butzleri).